We begin with the raw amino-acid sequence, 210 residues long: Peptidyl-tRNA hydrolase (210 aa).

Tyr-14 serves as a coordination point for tRNA. The active-site Proton acceptor is His-19. TRNA contacts are provided by Phe-64, Asn-66, and Asn-112.

Belongs to the PTH family. As to quaternary structure, monomer.

It localises to the cytoplasm. It catalyses the reaction an N-acyl-L-alpha-aminoacyl-tRNA + H2O = an N-acyl-L-amino acid + a tRNA + H(+). Functionally, hydrolyzes ribosome-free peptidyl-tRNAs (with 1 or more amino acids incorporated), which drop off the ribosome during protein synthesis, or as a result of ribosome stalling. In terms of biological role, catalyzes the release of premature peptidyl moieties from peptidyl-tRNA molecules trapped in stalled 50S ribosomal subunits, and thus maintains levels of free tRNAs and 50S ribosomes. In Methylorubrum extorquens (strain CM4 / NCIMB 13688) (Methylobacterium extorquens), this protein is Peptidyl-tRNA hydrolase.